We begin with the raw amino-acid sequence, 318 residues long: NADH-ubiquinone oxidoreductase chain 1 (318 aa).

A run of 8 helical transmembrane segments spans residues 2-22 (FFINIISLIIPILLAVAFLTL), 70-90 (MFILAPILALSLALTMWIPLP), 100-120 (LGVLFMLAMSSLAVYSILWSG), 147-167 (AIILLSVLLMNGSFTLSTLII), 171-191 (HMWLIFPAWPLAMMWFISTLA), 223-243 (FFLAEYANIIMMNILTTILFF), 253-273 (ELYSINFTMKTLLLTICFLWI), and 294-314 (LPLTLALCMWHVALPIITASI).

This sequence belongs to the complex I subunit 1 family. Core subunit of respiratory chain NADH dehydrogenase (Complex I) which is composed of 45 different subunits.

The protein localises to the mitochondrion inner membrane. It catalyses the reaction a ubiquinone + NADH + 5 H(+)(in) = a ubiquinol + NAD(+) + 4 H(+)(out). Its function is as follows. Core subunit of the mitochondrial membrane respiratory chain NADH dehydrogenase (Complex I) which catalyzes electron transfer from NADH through the respiratory chain, using ubiquinone as an electron acceptor. Essential for the catalytic activity and assembly of complex I. This chain is NADH-ubiquinone oxidoreductase chain 1 (MT-ND1), found in Canis lupus familiaris (Dog).